The following is a 203-amino-acid chain: Small ribosomal subunit protein uS2 (203 aa).

It belongs to the universal ribosomal protein uS2 family.

This is Small ribosomal subunit protein uS2 from Methanoregula boonei (strain DSM 21154 / JCM 14090 / 6A8).